We begin with the raw amino-acid sequence, 339 residues long: Ketol-acid reductoisomerase (NADP(+)) (339 aa).

One can recognise a KARI N-terminal Rossmann domain in the interval 1–182 (MRVYYDRDAD…GGGRSGIIET (182 aa)). NADP(+) contacts are provided by residues 24–27 (YGSQ), lysine 48, serine 51, threonine 53, and 83–86 (DELQ). Histidine 108 is an active-site residue. Position 134 (glycine 134) interacts with NADP(+). A KARI C-terminal knotted domain is found at 183–328 (NFREECETDL…AKLRAMMPWI (146 aa)). Residues aspartate 191, glutamate 195, glutamate 227, and glutamate 231 each contribute to the Mg(2+) site. Residue serine 252 coordinates substrate.

Belongs to the ketol-acid reductoisomerase family. The cofactor is Mg(2+).

The enzyme catalyses (2R)-2,3-dihydroxy-3-methylbutanoate + NADP(+) = (2S)-2-acetolactate + NADPH + H(+). The catalysed reaction is (2R,3R)-2,3-dihydroxy-3-methylpentanoate + NADP(+) = (S)-2-ethyl-2-hydroxy-3-oxobutanoate + NADPH + H(+). It functions in the pathway amino-acid biosynthesis; L-isoleucine biosynthesis; L-isoleucine from 2-oxobutanoate: step 2/4. It participates in amino-acid biosynthesis; L-valine biosynthesis; L-valine from pyruvate: step 2/4. Functionally, involved in the biosynthesis of branched-chain amino acids (BCAA). Catalyzes an alkyl-migration followed by a ketol-acid reduction of (S)-2-acetolactate (S2AL) to yield (R)-2,3-dihydroxy-isovalerate. In the isomerase reaction, S2AL is rearranged via a Mg-dependent methyl migration to produce 3-hydroxy-3-methyl-2-ketobutyrate (HMKB). In the reductase reaction, this 2-ketoacid undergoes a metal-dependent reduction by NADPH to yield (R)-2,3-dihydroxy-isovalerate. The sequence is that of Ketol-acid reductoisomerase (NADP(+)) from Mesorhizobium japonicum (strain LMG 29417 / CECT 9101 / MAFF 303099) (Mesorhizobium loti (strain MAFF 303099)).